A 431-amino-acid polypeptide reads, in one-letter code: Probable amino-acid ABC transporter periplasmic-binding protein y4oP (431 aa).

An N-terminal signal peptide occupies residues 1-25 (MKRRTFTAGLAALPFLGSSLTRAFA).

The protein belongs to the bacterial solute-binding protein 1 family.

It localises to the periplasm. In terms of biological role, probably part of the binding-protein-dependent transport system y4oPQRS. This system probably transports a sugar-like molecule. The chain is Probable amino-acid ABC transporter periplasmic-binding protein y4oP from Sinorhizobium fredii (strain NBRC 101917 / NGR234).